A 230-amino-acid chain; its full sequence is Voltage-gated hydrogen channel 1 (230 aa).

Over 1 to 58 (MAGCLRHFTSVGDDTKKREWKQEDVEVAYEEPLKNTPHPFIASYSFRGALKWLLSSHK) the chain is Cytoplasmic. Residues 59 to 79 (FQIVIICLVILDALFVLVEVL) traverse the membrane as a helical segment. The Extracellular segment spans residues 80-96 (LDLELLAEKVDHIIPEI). Residues 97 to 119 (FHYLSISVLTFFILEIAGKLYAF) form a helical membrane-spanning segment. The Cytoplasmic portion of the chain corresponds to 120–127 (RLEFFHHK). Residues 128 to 148 (FEVFDAAIVVISFIIDIVYIS) form a helical membrane-spanning segment. Residues 149-155 (REDIFNA) lie on the Extracellular side of the membrane. The helical transmembrane segment at 156-176 (VGLLILLRLWRVARIVNGVIV) threads the bilayer. Residues 177-230 (SVKTRAEEKMHKLKEQKGSLLEKVAQLEQQCAQQEQEIGRLHKLLQEHNVFPAS) are Cytoplasmic-facing. The stretch at 178–225 (VKTRAEEKMHKLKEQKGSLLEKVAQLEQQCAQQEQEIGRLHKLLQEHN) forms a coiled coil.

This sequence belongs to the hydrogen channel family. In terms of assembly, homodimer.

It localises to the membrane. The protein localises to the cell membrane. Mediates the voltage-dependent proton permeability of excitable membranes. Forms a proton-selective channel through which protons may pass in accordance with their electrochemical gradient. The chain is Voltage-gated hydrogen channel 1 (hvcn1) from Xenopus laevis (African clawed frog).